A 213-amino-acid polypeptide reads, in one-letter code: Pyridoxine/pyridoxamine 5'-phosphate oxidase (213 aa).

Residues 8–11 and Lys66 contribute to the substrate site; that span reads RQEY. FMN is bound by residues 61–66, 76–77, Arg82, Lys83, and Gln105; these read RTVLLK and YT. Positions 123, 127, and 131 each coordinate substrate. FMN contacts are provided by residues 140-141 and Trp185; that span reads QS. Substrate is bound at residue 191-193; that stretch reads RLH. Residue Arg195 participates in FMN binding.

It belongs to the pyridoxamine 5'-phosphate oxidase family. Homodimer. FMN is required as a cofactor.

It catalyses the reaction pyridoxamine 5'-phosphate + O2 + H2O = pyridoxal 5'-phosphate + H2O2 + NH4(+). The enzyme catalyses pyridoxine 5'-phosphate + O2 = pyridoxal 5'-phosphate + H2O2. The protein operates within cofactor metabolism; pyridoxal 5'-phosphate salvage; pyridoxal 5'-phosphate from pyridoxamine 5'-phosphate: step 1/1. It functions in the pathway cofactor metabolism; pyridoxal 5'-phosphate salvage; pyridoxal 5'-phosphate from pyridoxine 5'-phosphate: step 1/1. Functionally, catalyzes the oxidation of either pyridoxine 5'-phosphate (PNP) or pyridoxamine 5'-phosphate (PMP) into pyridoxal 5'-phosphate (PLP). This is Pyridoxine/pyridoxamine 5'-phosphate oxidase from Bacteroides thetaiotaomicron (strain ATCC 29148 / DSM 2079 / JCM 5827 / CCUG 10774 / NCTC 10582 / VPI-5482 / E50).